The chain runs to 180 residues: Large ribosomal subunit protein uL5 (180 aa).

The protein belongs to the universal ribosomal protein uL5 family. As to quaternary structure, part of the 50S ribosomal subunit; part of the 5S rRNA/L5/L18/L25 subcomplex. Contacts the 5S rRNA and the P site tRNA. Forms a bridge to the 30S subunit in the 70S ribosome.

In terms of biological role, this is one of the proteins that bind and probably mediate the attachment of the 5S RNA into the large ribosomal subunit, where it forms part of the central protuberance. In the 70S ribosome it contacts protein S13 of the 30S subunit (bridge B1b), connecting the 2 subunits; this bridge is implicated in subunit movement. Contacts the P site tRNA; the 5S rRNA and some of its associated proteins might help stabilize positioning of ribosome-bound tRNAs. The chain is Large ribosomal subunit protein uL5 from Mesoplasma florum (strain ATCC 33453 / NBRC 100688 / NCTC 11704 / L1) (Acholeplasma florum).